The sequence spans 467 residues: Pancreatic lipase-related protein 3 (467 aa).

The signal sequence occupies residues Met-1 to Gly-17. Cys-21 and Cys-27 are joined by a disulfide. Asn-74 carries N-linked (GlcNAc...) asparagine glycosylation. Cys-107 and Cys-118 are disulfide-bonded. N-linked (GlcNAc...) asparagine glycosylation is present at Asn-125. Residue Ser-168 is the Nucleophile of the active site. The Charge relay system role is filled by Asp-191. A disulfide bridge links Cys-252 with Cys-277. His-279 serves as the catalytic Charge relay system. 3 disulfides stabilise this stretch: Cys-301/Cys-312, Cys-315/Cys-320, and Cys-451/Cys-467. The 113-residue stretch at Trp-355–Cys-467 folds into the PLAT domain.

It belongs to the AB hydrolase superfamily. Lipase family. As to expression, overexpressed in hepatocellular carcinoma.

The protein resides in the secreted. It carries out the reaction a triacylglycerol + H2O = a diacylglycerol + a fatty acid + H(+). The protein is Pancreatic lipase-related protein 3 (PNLIPRP3) of Homo sapiens (Human).